A 662-amino-acid polypeptide reads, in one-letter code: UvrABC system protein B (662 aa).

Residues 25–182 (KGIEKGEKFQ…KKLVEIQYER (158 aa)) form the Helicase ATP-binding domain. 38 to 45 (GVTGSGKT) provides a ligand contact to ATP. A Beta-hairpin motif is present at residues 91 to 114 (YYDYYQPEAYVAQSDTYIEKDASI). The 167-residue stretch at 429–595 (QIDDLYTSIQ…TIIKDIREVI (167 aa)) folds into the Helicase C-terminal domain. The UVR domain maps to 622–657 (DKLIEKYEEEMKEAAQNLQFEKAAHLRDVIYKLKRD).

It belongs to the UvrB family. Forms a heterotetramer with UvrA during the search for lesions. Interacts with UvrC in an incision complex.

It localises to the cytoplasm. Functionally, the UvrABC repair system catalyzes the recognition and processing of DNA lesions. A damage recognition complex composed of 2 UvrA and 2 UvrB subunits scans DNA for abnormalities. Upon binding of the UvrA(2)B(2) complex to a putative damaged site, the DNA wraps around one UvrB monomer. DNA wrap is dependent on ATP binding by UvrB and probably causes local melting of the DNA helix, facilitating insertion of UvrB beta-hairpin between the DNA strands. Then UvrB probes one DNA strand for the presence of a lesion. If a lesion is found the UvrA subunits dissociate and the UvrB-DNA preincision complex is formed. This complex is subsequently bound by UvrC and the second UvrB is released. If no lesion is found, the DNA wraps around the other UvrB subunit that will check the other stand for damage. This is UvrABC system protein B from Clostridium botulinum (strain Loch Maree / Type A3).